Reading from the N-terminus, the 222-residue chain is 3-dehydroquinate dehydratase (222 aa).

3-dehydroquinate contacts are provided by residues 29–31 (ELR) and Arg-55. The Proton donor/acceptor role is filled by His-112. Lys-139 acts as the Schiff-base intermediate with substrate in catalysis. 3-dehydroquinate is bound by residues Arg-178, Ser-199, and Gln-203.

The protein belongs to the type-I 3-dehydroquinase family. In terms of assembly, homodimer.

It carries out the reaction 3-dehydroquinate = 3-dehydroshikimate + H2O. The protein operates within metabolic intermediate biosynthesis; chorismate biosynthesis; chorismate from D-erythrose 4-phosphate and phosphoenolpyruvate: step 3/7. In terms of biological role, involved in the third step of the chorismate pathway, which leads to the biosynthesis of aromatic amino acids. Catalyzes the cis-dehydration of 3-dehydroquinate (DHQ) and introduces the first double bond of the aromatic ring to yield 3-dehydroshikimate. This chain is 3-dehydroquinate dehydratase, found in Dehalococcoides mccartyi (strain ATCC BAA-2266 / KCTC 15142 / 195) (Dehalococcoides ethenogenes (strain 195)).